The following is an 82-amino-acid chain: uncharacterized protein (82 aa).

A compositionally biased stretch (low complexity) spans 29 to 38 (TATKSTSSGS). The segment at 29-64 (TATKSTSSGSVPSFFTESTSTPLNQSKTNTSTLNKS) is disordered. A compositionally biased stretch (polar residues) spans 39-50 (VPSFFTESTSTP). The span at 51–64 (LNQSKTNTSTLNKS) shows a compositional bias: low complexity.

This is an uncharacterized protein from Dictyostelium discoideum (Social amoeba).